The primary structure comprises 476 residues: MAAPGTPPPLAPETAGADSGGGSGEHRQLPELIRLKRNGGHLSEADIRNFVHALMDGRAQDTQIGAMLMAIRLQGMDLEETSVLTQALAESGQQLEWPKAWHQQLVDKHSTGGVGDKVSLVLAPALAACGCKVPMISGRSLGHTGGTLDKLESIPGFSVTQSPEQMLQILEEVGCCIVGQSEKLVPADGILYAARDVTATVDSVPLITASILSKKAVEGLSTLVVDVKFGGAAVFPDQEKARELAKMLVRVGMGLGLQVAAALTAMDNPLGRNVGHTLEVEEALLCLDGAGPPDLRDLVIRLGGAILWLSGQAETQDQGAARVAAALDDGSALHRFQLMLSAQGVDPGLARALCSGSPTQRRQLLPHARKQEELLSPADGIVECVRALPLACVLHELGAGRSRAGQPIRPGVGAELLVDVGQWLSRGTPWLRVHLDGPALSSQQRRTLLGALVLSDRAPFKAPSPFAELVLPPTTP.

A compositionally biased stretch (pro residues) spans 1–11 (MAAPGTPPPLA). Positions 1 to 26 (MAAPGTPPPLAPETAGADSGGGSGEH) are disordered. A phosphothreonine mark is found at Thr6 and Thr475.

Belongs to the thymidine/pyrimidine-nucleoside phosphorylase family. Homodimer.

The catalysed reaction is thymidine + phosphate = 2-deoxy-alpha-D-ribose 1-phosphate + thymine. Its pathway is pyrimidine metabolism; dTMP biosynthesis via salvage pathway; dTMP from thymine: step 1/2. Its function is as follows. Catalyzes the reversible phosphorolysis of thymidine. The produced molecules are then utilized as carbon and energy sources or in the rescue of pyrimidine bases for nucleotide synthesis. In Rattus norvegicus (Rat), this protein is Thymidine phosphorylase (Tymp).